Consider the following 275-residue polypeptide: Elongation factor Ts (275 aa).

Lysine 36 participates in a covalent cross-link: Isoglutamyl lysine isopeptide (Lys-Gln) (interchain with Q-Cter in protein Pup). Residues 76 to 79 (TDFV) form an involved in Mg(2+) ion dislocation from EF-Tu region.

Belongs to the EF-Ts family.

It localises to the cytoplasm. Its function is as follows. Associates with the EF-Tu.GDP complex and induces the exchange of GDP to GTP. It remains bound to the aminoacyl-tRNA.EF-Tu.GTP complex up to the GTP hydrolysis stage on the ribosome. This chain is Elongation factor Ts, found in Mycolicibacterium smegmatis (strain ATCC 700084 / mc(2)155) (Mycobacterium smegmatis).